Here is a 124-residue protein sequence, read N- to C-terminus: Prefoldin subunit beta (124 aa).

The protein belongs to the prefoldin subunit beta family. As to quaternary structure, heterohexamer of two alpha and four beta subunits.

The protein localises to the cytoplasm. Molecular chaperone capable of stabilizing a range of proteins. Seems to fulfill an ATP-independent, HSP70-like function in archaeal de novo protein folding. This Thermoplasma acidophilum (strain ATCC 25905 / DSM 1728 / JCM 9062 / NBRC 15155 / AMRC-C165) protein is Prefoldin subunit beta (pfdB).